A 316-amino-acid chain; its full sequence is Coiled-coil domain-containing protein 42 (316 aa).

Coiled coils occupy residues 43–151 and 182–236; these read RLLE…EYSI and HHDL…SDVI.

This sequence belongs to the CFAP73 family. Interacts with ODF1 and ODF2. Interacts with CCDC38. Interacts with CCDC146. Interacts with CFAP53.

The protein localises to the cytoplasm. Its subcellular location is the perinuclear region. The protein resides in the cytoskeleton. It is found in the cell projection. It localises to the cilium. The protein localises to the flagellum. Its subcellular location is the microtubule organizing center. The protein resides in the centrosome. Functionally, essential for male fertility. Required for sperm development. This is Coiled-coil domain-containing protein 42 from Bos taurus (Bovine).